Here is a 240-residue protein sequence, read N- to C-terminus: Terpene cyclase cdmG (240 aa).

Transmembrane regions (helical) follow at residues 16 to 36 (YASI…LNYG), 48 to 68 (YGMA…YTVI), 78 to 98 (IIMT…IKFA), 112 to 132 (IPFI…ALAA), 134 to 154 (VGPG…LTIG), and 167 to 187 (GVSY…VICV). A glycan (N-linked (GlcNAc...) asparagine) is linked at N197. The chain crosses the membrane as a helical span at residues 205–225 (IMKCFSGISLAVEIVYGVTLW).

Belongs to the paxB family.

It is found in the membrane. The enzyme catalyses verruculide C epoxide = 3-hydroxypentacecilide A. It functions in the pathway secondary metabolite biosynthesis; terpenoid biosynthesis. In terms of biological role, terpene cyclase; part of the gene cluster that mediates the biosynthesis of chrodrimanin B, a meroterpenoid that acts as a potent blocker of insect GABA-gated chloride channels. The first step of the pathway is the biosynthesis of 6-hydroxymellein by the polyketide synthase cdmE. The prenyltransferase cdmH acts as a 6-hydroxymellein 5-farnesyltransferase and produces the hydrophobic metabolite verruculide C. The FAD-dependent monooxygenase cdmI further converts verruculide C into verruculide B. The terpene cyclase cdmG then produced the pentacyclic molecule 3-hydroxypentacecilide A, the backbone structure of chrodrimanin B, via folding the farnesyl moiety of the substrate into the chair-boat conformation. The short-chain dehydrogenase/reductase cdmF functions as the 3-OH dehydrogenase that oxidizes the C-3 hydroxyl group of 3-hydroxypentacecilide A and produces chrodrimanin C, the dehydrogenated product of 3-hydroxypentacecilide A. The cytochrome P450 monooxygenase cdmJ then accepts both 3-hydroxypentacecilide A and chrodrimanin C and functions as a C-7-beta-hydroxylase to produce respectively chrodrimanin H and chrodrimanin F. The dioxygenase cdmA accepts chrodrimanin H to afford chrodrimanin E, which is further transformed to chrodrimanin A by the dioxygenase cdmD. CdmA can also accept chrodrimanin C as substrate to convert it into verruculide A, which is further converted into chrodrimanin T by cdmD. The last step of the biosynthesis is proposed to be performed by the acetyltransferase cdmC which acetylates chrodrimanin A to yield chrodrimanin B. The pathway may also lead to the production of additional shunt products, including chrodrimanins T and U. The polypeptide is Terpene cyclase cdmG (Talaromyces verruculosus (Penicillium verruculosum)).